Reading from the N-terminus, the 282-residue chain is ATP phosphoribosyltransferase (282 aa).

The protein belongs to the ATP phosphoribosyltransferase family. Long subfamily. Mg(2+) serves as cofactor.

It localises to the cytoplasm. It catalyses the reaction 1-(5-phospho-beta-D-ribosyl)-ATP + diphosphate = 5-phospho-alpha-D-ribose 1-diphosphate + ATP. It participates in amino-acid biosynthesis; L-histidine biosynthesis; L-histidine from 5-phospho-alpha-D-ribose 1-diphosphate: step 1/9. Its activity is regulated as follows. Feedback inhibited by histidine. Catalyzes the condensation of ATP and 5-phosphoribose 1-diphosphate to form N'-(5'-phosphoribosyl)-ATP (PR-ATP). Has a crucial role in the pathway because the rate of histidine biosynthesis seems to be controlled primarily by regulation of HisG enzymatic activity. In Micrococcus luteus (strain ATCC 4698 / DSM 20030 / JCM 1464 / CCM 169 / CCUG 5858 / IAM 1056 / NBRC 3333 / NCIMB 9278 / NCTC 2665 / VKM Ac-2230) (Micrococcus lysodeikticus), this protein is ATP phosphoribosyltransferase.